Consider the following 510-residue polypeptide: Probable gamma-aminobutyrate transaminase 3, mitochondrial (510 aa).

The transit peptide at 1–41 directs the protein to the mitochondrion; it reads MICRSLLLLRSNAASKASNIVKHVAATGCLPKYSSEAPARY. 166–167 is a binding site for pyridoxal 5'-phosphate; the sequence is GS. Tyrosine 199 is a binding site for substrate. Position 306 (aspartate 306) interacts with pyridoxal 5'-phosphate. Substrate is bound at residue lysine 335. At lysine 335 the chain carries N6-(pyridoxal phosphate)lysine.

This sequence belongs to the class-III pyridoxal-phosphate-dependent aminotransferase family.

Its subcellular location is the mitochondrion. The catalysed reaction is 4-aminobutanoate + pyruvate = succinate semialdehyde + L-alanine. It catalyses the reaction 4-aminobutanoate + glyoxylate = succinate semialdehyde + glycine. Its function is as follows. Transaminase that degrades gamma-amino butyric acid (GABA). This Oryza sativa subsp. japonica (Rice) protein is Probable gamma-aminobutyrate transaminase 3, mitochondrial.